A 217-amino-acid polypeptide reads, in one-letter code: ATP phosphoribosyltransferase (217 aa).

Belongs to the ATP phosphoribosyltransferase family. Short subfamily. As to quaternary structure, heteromultimer composed of HisG and HisZ subunits.

It is found in the cytoplasm. The enzyme catalyses 1-(5-phospho-beta-D-ribosyl)-ATP + diphosphate = 5-phospho-alpha-D-ribose 1-diphosphate + ATP. It functions in the pathway amino-acid biosynthesis; L-histidine biosynthesis; L-histidine from 5-phospho-alpha-D-ribose 1-diphosphate: step 1/9. In terms of biological role, catalyzes the condensation of ATP and 5-phosphoribose 1-diphosphate to form N'-(5'-phosphoribosyl)-ATP (PR-ATP). Has a crucial role in the pathway because the rate of histidine biosynthesis seems to be controlled primarily by regulation of HisG enzymatic activity. This is ATP phosphoribosyltransferase from Burkholderia orbicola (strain AU 1054).